A 281-amino-acid polypeptide reads, in one-letter code: NAD-dependent protein deacetylase 3 (281 aa).

In terms of domain architecture, Deacetylase sirtuin-type spans 1–281 (MLDSPTLDLL…PWLAEQLITR (281 aa)). NAD(+)-binding positions include 27–47 (GAGISTASGIPDYRDKDGVRR) and 105–108 (QNVD). H123 acts as the Proton acceptor in catalysis. 4 residues coordinate Zn(2+): C131, C134, C182, and C185. NAD(+)-binding positions include 223 to 225 (GTS), 249 to 251 (NHG), and C267.

It belongs to the sirtuin family. Class II subfamily. Zn(2+) serves as cofactor.

The protein localises to the cytoplasm. The catalysed reaction is N(6)-acetyl-L-lysyl-[protein] + NAD(+) + H2O = 2''-O-acetyl-ADP-D-ribose + nicotinamide + L-lysyl-[protein]. NAD-dependent protein deacetylase which modulates the activities of several enzymes which are inactive in their acetylated form. The sequence is that of NAD-dependent protein deacetylase 3 from Pseudomonas syringae pv. tomato (strain ATCC BAA-871 / DC3000).